Consider the following 276-residue polypeptide: NAD kinase (276 aa).

The active-site Proton acceptor is the Asp-61. NAD(+) is bound by residues Asp-61–Gly-62, Asn-134–Asp-135, Arg-145, Lys-162, Asp-164, Val-172, Thr-175–Ser-180, and Gln-234.

Belongs to the NAD kinase family. A divalent metal cation is required as a cofactor.

It localises to the cytoplasm. It carries out the reaction NAD(+) + ATP = ADP + NADP(+) + H(+). Involved in the regulation of the intracellular balance of NAD and NADP, and is a key enzyme in the biosynthesis of NADP. Catalyzes specifically the phosphorylation on 2'-hydroxyl of the adenosine moiety of NAD to yield NADP. In Clostridium perfringens (strain ATCC 13124 / DSM 756 / JCM 1290 / NCIMB 6125 / NCTC 8237 / Type A), this protein is NAD kinase.